Consider the following 103-residue polypeptide: NADH-quinone oxidoreductase subunit K (103 aa).

The next 3 helical transmembrane spans lie at 6 to 26 (IEYY…GFLL), 30 to 50 (LLVL…TLVA), and 66 to 86 (FFVI…VLAF).

Belongs to the complex I subunit 4L family. In terms of assembly, NDH-1 is composed of 14 different subunits. Subunits NuoA, H, J, K, L, M, N constitute the membrane sector of the complex.

The protein resides in the cell inner membrane. The catalysed reaction is a quinone + NADH + 5 H(+)(in) = a quinol + NAD(+) + 4 H(+)(out). NDH-1 shuttles electrons from NADH, via FMN and iron-sulfur (Fe-S) centers, to quinones in the respiratory chain. The immediate electron acceptor for the enzyme in this species is believed to be ubiquinone. Couples the redox reaction to proton translocation (for every two electrons transferred, four hydrogen ions are translocated across the cytoplasmic membrane), and thus conserves the redox energy in a proton gradient. The polypeptide is NADH-quinone oxidoreductase subunit K (Sorangium cellulosum (strain So ce56) (Polyangium cellulosum (strain So ce56))).